The chain runs to 253 residues: HTH-type transcriptional regulator YdeO (253 aa).

One can recognise an HTH araC/xylS-type domain in the interval 137–233; it reads GKVRNIVNMK…GNSPKRVSKE (97 aa). 2 DNA-binding regions (H-T-H motif) span residues 154–175 and 200–223; these read KDIC…KQEQ and VNKI…RKHF.

Its function is as follows. Induces the expression of gadE and mdtEF. Could also regulate the expression of other genes involved in acid resistance. The protein is HTH-type transcriptional regulator YdeO (ydeO) of Escherichia coli (strain K12).